Reading from the N-terminus, the 189-residue chain is Elongation factor P (189 aa).

Position 34 is an N6-(3,6-diaminohexanoyl)-5-hydroxylysine (lysine 34).

This sequence belongs to the elongation factor P family. Post-translationally, may be beta-lysylated on the epsilon-amino group of Lys-34 by the combined action of EpmA and EpmB, and then hydroxylated on the C5 position of the same residue by EpmC (if this protein is present). Lysylation is critical for the stimulatory effect of EF-P on peptide-bond formation. The lysylation moiety may extend toward the peptidyltransferase center and stabilize the terminal 3-CCA end of the tRNA. Hydroxylation of the C5 position on Lys-34 may allow additional potential stabilizing hydrogen-bond interactions with the P-tRNA.

It is found in the cytoplasm. The protein operates within protein biosynthesis; polypeptide chain elongation. Functionally, involved in peptide bond synthesis. Alleviates ribosome stalling that occurs when 3 or more consecutive Pro residues or the sequence PPG is present in a protein, possibly by augmenting the peptidyl transferase activity of the ribosome. Modification of Lys-34 is required for alleviation. The polypeptide is Elongation factor P (Teredinibacter turnerae (strain ATCC 39867 / T7901)).